A 103-amino-acid polypeptide reads, in one-letter code: Thioredoxin-1 (103 aa).

Positions 2–103 constitute a Thioredoxin domain; the sequence is VTQFKTASEF…AIKQAIAANA (102 aa). Active-site nucleophile residues include cysteine 30 and cysteine 33. Cysteine 30 and cysteine 33 are disulfide-bonded. Glycyl lysine isopeptide (Lys-Gly) (interchain with G-Cter in ubiquitin) cross-links involve residues lysine 54, lysine 66, and lysine 96.

Belongs to the thioredoxin family. As to quaternary structure, monomer. Part of the heterodimeric LMA1 complex together with the proteinase inhibitor PBI2. Most of the thioredoxin of yeast is in this complex rather than the well-studied monomer. LMA1 binds to the ATPase SEC18. Reversible disulfide bond formation between Cys-30 and Cys-33, reverted by thioredoxin reductase TRR1 using NADPH as hydrogen donor.

The protein resides in the nucleus. It is found in the cytoplasm. The protein localises to the golgi apparatus membrane. Its subcellular location is the mitochondrion intermembrane space. Functionally, participates as a hydrogen donor in redox reactions through the reversible oxidation of its active center dithiol to a disulfide, accompanied by the transfer of 2 electrons and 2 protons. It is involved in many cellular processes, including deoxyribonucleotide synthesis, repair of oxidatively damaged proteins, protein folding, sulfur metabolism, and redox homeostasis. Thioredoxin-dependent enzymes include phosphoadenosine-phosphosulfate reductase MET16, alkyl-hydroperoxide reductase DOT5, thioredoxin peroxidases TSA1 and TSA2, alkyl hydroperoxide reductase AHP1, and peroxiredoxin HYR1. Thioredoxin is also involved in protection against reducing stress. As part of the LMA1 complex, it is involved in the facilitation of vesicle fusion such as homotypic vacuole and ER-derived COPII vesicle fusion with the Golgi. This activity does not require the redox mechanism. The protein is Thioredoxin-1 (TRX1) of Saccharomyces cerevisiae (strain ATCC 204508 / S288c) (Baker's yeast).